We begin with the raw amino-acid sequence, 802 residues long: Leucine--tRNA ligase (802 aa).

The 'HIGH' region motif lies at 39-50 (PYPSGAGLHVGH). Residues 574–578 (KMSKS) carry the 'KMSKS' region motif. Lysine 577 is a binding site for ATP.

This sequence belongs to the class-I aminoacyl-tRNA synthetase family.

The protein localises to the cytoplasm. It catalyses the reaction tRNA(Leu) + L-leucine + ATP = L-leucyl-tRNA(Leu) + AMP + diphosphate. This chain is Leucine--tRNA ligase, found in Macrococcus caseolyticus (strain JCSC5402) (Macrococcoides caseolyticum).